The primary structure comprises 367 residues: Aminomethyltransferase (367 aa).

It belongs to the GcvT family. As to quaternary structure, the glycine cleavage system is composed of four proteins: P, T, L and H.

The catalysed reaction is N(6)-[(R)-S(8)-aminomethyldihydrolipoyl]-L-lysyl-[protein] + (6S)-5,6,7,8-tetrahydrofolate = N(6)-[(R)-dihydrolipoyl]-L-lysyl-[protein] + (6R)-5,10-methylene-5,6,7,8-tetrahydrofolate + NH4(+). In terms of biological role, the glycine cleavage system catalyzes the degradation of glycine. The polypeptide is Aminomethyltransferase (Lysinibacillus sphaericus (strain C3-41)).